Consider the following 372-residue polypeptide: AA9 family lytic polysaccharide monooxygenase C (372 aa).

Residues 1 to 16 (MFRSALFLLLAPLALS) form the signal peptide. The Cu(2+) site is built by His-17 and His-99. An intrachain disulfide couples Cys-59 to Cys-189. O2 is bound by residues His-174 and Gln-184. Residue Tyr-186 coordinates Cu(2+).

Belongs to the polysaccharide monooxygenase AA9 family. The cofactor is Cu(2+).

It localises to the secreted. The enzyme catalyses [(1-&gt;4)-beta-D-glucosyl]n+m + reduced acceptor + O2 = 4-dehydro-beta-D-glucosyl-[(1-&gt;4)-beta-D-glucosyl]n-1 + [(1-&gt;4)-beta-D-glucosyl]m + acceptor + H2O.. In terms of biological role, lytic polysaccharide monooxygenase (LPMO) that depolymerizes crystalline and amorphous polysaccharides via the oxidation of scissile alpha- or beta-(1-4)-glycosidic bonds, yielding C1 or C4 oxidation products. Catalysis by LPMOs requires the reduction of the active-site copper from Cu(II) to Cu(I) by a reducing agent and H(2)O(2) or O(2) as a cosubstrate. This chain is AA9 family lytic polysaccharide monooxygenase C, found in Aspergillus tamarii.